Consider the following 204-residue polypeptide: Holliday junction branch migration complex subunit RuvA (204 aa).

A domain I region spans residues 1-64 (MIGRLRGVVI…EDAQLLYGFN (64 aa)). Residues 65-143 (HKQERALFRE…GWVSHDLFSP (79 aa)) form a domain II region. A flexible linker region spans residues 144–155 (AEISLPARESVL). The domain III stretch occupies residues 156–204 (RAPDSSEEAASALVALGYKPQQASQIVSKIAKEGMSVEDIIRESLRSLV).

The protein belongs to the RuvA family. As to quaternary structure, homotetramer. Forms an RuvA(8)-RuvB(12)-Holliday junction (HJ) complex. HJ DNA is sandwiched between 2 RuvA tetramers; dsDNA enters through RuvA and exits via RuvB. An RuvB hexamer assembles on each DNA strand where it exits the tetramer. Each RuvB hexamer is contacted by two RuvA subunits (via domain III) on 2 adjacent RuvB subunits; this complex drives branch migration. In the full resolvosome a probable DNA-RuvA(4)-RuvB(12)-RuvC(2) complex forms which resolves the HJ.

Its subcellular location is the cytoplasm. In terms of biological role, the RuvA-RuvB-RuvC complex processes Holliday junction (HJ) DNA during genetic recombination and DNA repair, while the RuvA-RuvB complex plays an important role in the rescue of blocked DNA replication forks via replication fork reversal (RFR). RuvA specifically binds to HJ cruciform DNA, conferring on it an open structure. The RuvB hexamer acts as an ATP-dependent pump, pulling dsDNA into and through the RuvAB complex. HJ branch migration allows RuvC to scan DNA until it finds its consensus sequence, where it cleaves and resolves the cruciform DNA. The chain is Holliday junction branch migration complex subunit RuvA from Aeromonas salmonicida (strain A449).